The sequence spans 138 residues: Basic phospholipase A2 sistruxin B (138 aa).

The N-terminal stretch at 1–16 is a signal peptide; sequence MRALWIVAVLLVGVEG. Cystine bridges form between C42-C131, C44-C60, C59-C111, C65-C138, C66-C104, C73-C97, and C91-C102. Ca(2+) contacts are provided by Y43, G45, and G47. H63 is an active-site residue. D64 contributes to the Ca(2+) binding site. The active site involves D105.

As to quaternary structure, heterodimer of an acidic subunit and a basic chain. The acidic subunit is non-toxic, without enzymatic activity and comprises 3 peptides that are cross-linked by 7 disulfide bridges. The basic subunit is toxic, has phospholipase A2 activity and is composed of a single chain. Ca(2+) serves as cofactor. Expressed by the venom gland.

It localises to the secreted. It carries out the reaction a 1,2-diacyl-sn-glycero-3-phosphocholine + H2O = a 1-acyl-sn-glycero-3-phosphocholine + a fatty acid + H(+). Functionally, snake venom phospholipase A2 (PLA2) that shows presynaptic neurotoxicity. PLA2 catalyzes the calcium-dependent hydrolysis of the 2-acyl groups in 3-sn-phosphoglycerides. The sequence is that of Basic phospholipase A2 sistruxin B from Sistrurus tergeminus (Western massasauga).